The primary structure comprises 227 residues: Cytochrome c oxidase subunit 2 (227 aa).

Over 1–14 the chain is Mitochondrial intermembrane; sequence MAYPFQLGLQDATS. A helical transmembrane segment spans residues 15-45; that stretch reads PIMEELLHFHDHTLMIVFLISSLVLYIISSM. The Mitochondrial matrix portion of the chain corresponds to 46–59; that stretch reads LTTKLTHTSTMDAQ. The chain crosses the membrane as a helical span at residues 60–87; it reads EVETVWTILPAIILVLIALPSLRILYMM. Residues 88–227 lie on the Mitochondrial intermembrane side of the membrane; that stretch reads DETNNPSLTV…YFETWSALMV (140 aa). Cu cation-binding residues include H161, C196, E198, C200, H204, and M207. E198 is a binding site for Mg(2+). Y218 carries the post-translational modification Phosphotyrosine.

The protein belongs to the cytochrome c oxidase subunit 2 family. In terms of assembly, component of the cytochrome c oxidase (complex IV, CIV), a multisubunit enzyme composed of 14 subunits. The complex is composed of a catalytic core of 3 subunits MT-CO1, MT-CO2 and MT-CO3, encoded in the mitochondrial DNA, and 11 supernumerary subunits COX4I, COX5A, COX5B, COX6A, COX6B, COX6C, COX7A, COX7B, COX7C, COX8 and NDUFA4, which are encoded in the nuclear genome. The complex exists as a monomer or a dimer and forms supercomplexes (SCs) in the inner mitochondrial membrane with NADH-ubiquinone oxidoreductase (complex I, CI) and ubiquinol-cytochrome c oxidoreductase (cytochrome b-c1 complex, complex III, CIII), resulting in different assemblies (supercomplex SCI(1)III(2)IV(1) and megacomplex MCI(2)III(2)IV(2)). Found in a complex with TMEM177, COA6, COX18, COX20, SCO1 and SCO2. Interacts with TMEM177 in a COX20-dependent manner. Interacts with COX20. Interacts with COX16. Requires Cu cation as cofactor.

Its subcellular location is the mitochondrion inner membrane. The catalysed reaction is 4 Fe(II)-[cytochrome c] + O2 + 8 H(+)(in) = 4 Fe(III)-[cytochrome c] + 2 H2O + 4 H(+)(out). In terms of biological role, component of the cytochrome c oxidase, the last enzyme in the mitochondrial electron transport chain which drives oxidative phosphorylation. The respiratory chain contains 3 multisubunit complexes succinate dehydrogenase (complex II, CII), ubiquinol-cytochrome c oxidoreductase (cytochrome b-c1 complex, complex III, CIII) and cytochrome c oxidase (complex IV, CIV), that cooperate to transfer electrons derived from NADH and succinate to molecular oxygen, creating an electrochemical gradient over the inner membrane that drives transmembrane transport and the ATP synthase. Cytochrome c oxidase is the component of the respiratory chain that catalyzes the reduction of oxygen to water. Electrons originating from reduced cytochrome c in the intermembrane space (IMS) are transferred via the dinuclear copper A center (CU(A)) of subunit 2 and heme A of subunit 1 to the active site in subunit 1, a binuclear center (BNC) formed by heme A3 and copper B (CU(B)). The BNC reduces molecular oxygen to 2 water molecules using 4 electrons from cytochrome c in the IMS and 4 protons from the mitochondrial matrix. The chain is Cytochrome c oxidase subunit 2 (MT-CO2) from Chrysocyon brachyurus (Maned wolf).